Reading from the N-terminus, the 95-residue chain is Small ribosomal subunit protein bS18 (95 aa).

Belongs to the bacterial ribosomal protein bS18 family. In terms of assembly, part of the 30S ribosomal subunit. Forms a tight heterodimer with protein bS6.

Functionally, binds as a heterodimer with protein bS6 to the central domain of the 16S rRNA, where it helps stabilize the platform of the 30S subunit. This chain is Small ribosomal subunit protein bS18, found in Rickettsia felis (strain ATCC VR-1525 / URRWXCal2) (Rickettsia azadi).